The chain runs to 301 residues: Protein SCO2, mitochondrial (301 aa).

The chain crosses the membrane as a helical span at residues 82–98; that stretch reads ATIALLLLSGGTYAYLS. Residues 101 to 284 form the Thioredoxin domain; the sequence is RRLLETEKEA…IREQIQAYVP (184 aa). Residues Cys154, Cys158, and His245 each contribute to the Cu cation site.

It belongs to the SCO1/2 family.

The protein localises to the mitochondrion inner membrane. Acts as a copper chaperone, transporting copper to the Cu(A) site on the cytochrome c oxidase subunit II (COX2). The sequence is that of Protein SCO2, mitochondrial (SCO2) from Saccharomyces cerevisiae (strain ATCC 204508 / S288c) (Baker's yeast).